Here is a 1272-residue protein sequence, read N- to C-terminus: Regulator of nonsense transcripts 2 (1272 aa).

The span at 1–114 (MPAERKKPAS…QEEQAKRQQE (114 aa)) shows a compositional bias: basic and acidic residues. 4 disordered regions span residues 1-126 (MPAE…EKEE), 370-389 (DHRE…HSKG), 423-445 (NMPD…DIFT), and 490-517 (CQNK…SPDD). Positions 54–134 (EDKKKRLEDD…EESIQLHQEA (81 aa)) form a coiled coil. The segment at 94–133 (KKKHQEEERKKQEEQAKRQQEEEAAAQMKEKEESIQLHQE) is sufficient for interaction with UPF1. Residues 168 to 431 (LKKNTAFVKK…ENMPDLPQDK (264 aa)) enclose the MIF4G 1 domain. 2 stretches are compositionally biased toward basic and acidic residues: residues 428-439 (PQDKPTPEEHGP) and 490-513 (CQNK…KEVS). The stretch at 487–559 (EKSCQNKESN…EQEQEDEEAS (73 aa)) forms a coiled coil. MIF4G domains follow at residues 569–758 (DAFL…CNPP) and 773–986 (EYVR…LRPK). Positions 711–928 (GRFLFRSPES…IRLVCTILDT (218 aa)) are sufficient for interaction with UPF3A and UPF3B. The sufficient for interaction with EIF4A1 and EIF1 stretch occupies residues 757–1272 (PPPAEKTVKK…LIFKTGGRRR (516 aa)). The binds to UPF3B stretch occupies residues 839–859 (EDVGIHVVDGVLEDIRLGMEV). The segment at 1018–1098 (DSKDSMTEGE…DEENTEVMIK (81 aa)) is disordered. A compositionally biased stretch (acidic residues) spans 1027-1076 (ENLEEDEEEEEGGAETEEQSGNESEVNEPEEEEGSDNDDDEGEEEEEENT). The tract at residues 1084-1272 (KENETDEENT…LIFKTGGRRR (189 aa)) is sufficient for interaction with UPF1 C-terminus. Thr1088 carries the post-translational modification Phosphothreonine. Interaction with UPF1 regions lie at residues 1105–1129 (VPCV…QQRS) and 1167–1207 (DTMP…AEQE). The necessary for interaction with UPF1 stretch occupies residues 1105-1198 (VPCVEDEDFI…PMSSQLAANH (94 aa)). A disordered region spans residues 1220 to 1272 (NERQEQEDYQEMLQSLAQRPAPANTNRERRPRYQHPKGAPNADLIFKTGGRRR).

In terms of assembly, found in a post-splicing messenger ribonucleoprotein (mRNP) complex. Associates with the exon junction complex (EJC). Interacts with SMG1, EST1A, UPF1, UPF3A, UPF3B, EIF4A1 and EIF1. As to expression, ubiquitous.

It localises to the cytoplasm. The protein resides in the perinuclear region. Involved in nonsense-mediated decay (NMD) of mRNAs containing premature stop codons by associating with the nuclear exon junction complex (EJC). Recruited by UPF3B associated with the EJC core at the cytoplasmic side of the nuclear envelope and the subsequent formation of an UPF1-UPF2-UPF3 surveillance complex (including UPF1 bound to release factors at the stalled ribosome) is believed to activate NMD. In cooperation with UPF3B stimulates both ATPase and RNA helicase activities of UPF1. Binds spliced mRNA. This chain is Regulator of nonsense transcripts 2, found in Homo sapiens (Human).